Consider the following 150-residue polypeptide: Avidin-related protein 3 (150 aa).

Positions 1–24 (MVHTTSPLLLLLLLSLALVAPSLS) are cleaved as a signal peptide. The region spanning 26 to 147 (RKCSLTGKWT…GYNNFTRQRT (122 aa)) is the Avidin-like domain. A disulfide bond links C28 and C105. Residues N36, S40, Y57, T59, and D63 each coordinate biotin. N-linked (GlcNAc...) asparagine glycosylation occurs at N93. Biotin is bound by residues S95, S99, and N140. An N-linked (GlcNAc...) asparagine glycan is attached at N141.

It belongs to the avidin/streptavidin family. As to quaternary structure, homotetramer. Post-translationally, glycosylated.

The protein localises to the secreted. Its function is as follows. Forms a strong non-covalent specific complex with biotin. The polypeptide is Avidin-related protein 3 (AVR3) (Gallus gallus (Chicken)).